A 499-amino-acid chain; its full sequence is Glycerol kinase (499 aa).

Thr-13 provides a ligand contact to ADP. Residues Thr-13, Thr-14, and Ser-15 each coordinate ATP. Thr-13 contacts sn-glycerol 3-phosphate. ADP is bound at residue Arg-17. Sn-glycerol 3-phosphate is bound by residues Arg-83, Glu-84, Tyr-135, and Asp-244. Residues Arg-83, Glu-84, Tyr-135, Asp-244, and Gln-245 each coordinate glycerol. Residues Thr-266 and Gly-309 each coordinate ADP. Residues Thr-266, Gly-309, Gln-313, and Gly-410 each coordinate ATP. Residues Gly-410 and Asn-414 each contribute to the ADP site.

The protein belongs to the FGGY kinase family. In terms of assembly, homotetramer and homodimer (in equilibrium).

It carries out the reaction glycerol + ATP = sn-glycerol 3-phosphate + ADP + H(+). It functions in the pathway polyol metabolism; glycerol degradation via glycerol kinase pathway; sn-glycerol 3-phosphate from glycerol: step 1/1. With respect to regulation, activated by phosphorylation and inhibited by fructose 1,6-bisphosphate (FBP). Key enzyme in the regulation of glycerol uptake and metabolism. Catalyzes the phosphorylation of glycerol to yield sn-glycerol 3-phosphate. The sequence is that of Glycerol kinase from Brevibacillus brevis (strain 47 / JCM 6285 / NBRC 100599).